A 418-amino-acid polypeptide reads, in one-letter code: Dwarfin sma-2 (418 aa).

The MH1 domain maps to 8-134 (KKITERLKWK…YKRVHATGVL (127 aa)). Positions 62, 107, 119, and 124 each coordinate Zn(2+). Residues 222–418 (WATVSYYELN…PTPRPISSIS (197 aa)) enclose the MH2 domain.

The protein belongs to the dwarfin/SMAD family.

The protein localises to the cytoplasm. It is found in the nucleus. Involved in TGF-beta pathway. Plays a role in male tail tip morphogenesis. This Caenorhabditis elegans protein is Dwarfin sma-2.